The sequence spans 161 residues: Ribosome maturation factor RimP (161 aa).

Belongs to the RimP family.

It is found in the cytoplasm. Required for maturation of 30S ribosomal subunits. This is Ribosome maturation factor RimP from Herminiimonas arsenicoxydans.